The chain runs to 438 residues: uncharacterized protein (438 aa).

The first 19 residues, 1–19, serve as a signal peptide directing secretion; sequence MKKLLLAASIICLASAGLA.

This is an uncharacterized protein from Rickettsia conorii (strain ATCC VR-613 / Malish 7).